The chain runs to 116 residues: Iron-sulfur cluster insertion protein ErpA (116 aa).

Positions 44, 108, and 110 each coordinate iron-sulfur cluster.

The protein belongs to the HesB/IscA family. In terms of assembly, homodimer. Iron-sulfur cluster is required as a cofactor.

Its function is as follows. Required for insertion of 4Fe-4S clusters for at least IspG. The protein is Iron-sulfur cluster insertion protein ErpA of Francisella philomiragia subsp. philomiragia (strain ATCC 25017 / CCUG 19701 / FSC 153 / O#319-036).